The chain runs to 426 residues: Serine--tRNA ligase (426 aa).

235–237 is a binding site for L-serine; the sequence is TAE. 266-268 serves as a coordination point for ATP; sequence RRE. Residue E289 coordinates L-serine. 353–356 serves as a coordination point for ATP; the sequence is EISS. Residue S389 participates in L-serine binding.

It belongs to the class-II aminoacyl-tRNA synthetase family. Type-1 seryl-tRNA synthetase subfamily. In terms of assembly, homodimer. The tRNA molecule binds across the dimer.

Its subcellular location is the cytoplasm. It catalyses the reaction tRNA(Ser) + L-serine + ATP = L-seryl-tRNA(Ser) + AMP + diphosphate + H(+). It carries out the reaction tRNA(Sec) + L-serine + ATP = L-seryl-tRNA(Sec) + AMP + diphosphate + H(+). It participates in aminoacyl-tRNA biosynthesis; selenocysteinyl-tRNA(Sec) biosynthesis; L-seryl-tRNA(Sec) from L-serine and tRNA(Sec): step 1/1. In terms of biological role, catalyzes the attachment of serine to tRNA(Ser). Is also able to aminoacylate tRNA(Sec) with serine, to form the misacylated tRNA L-seryl-tRNA(Sec), which will be further converted into selenocysteinyl-tRNA(Sec). In Nostoc sp. (strain PCC 7120 / SAG 25.82 / UTEX 2576), this protein is Serine--tRNA ligase.